A 910-amino-acid polypeptide reads, in one-letter code: Bifunctional glucose-6-phosphate 1-dehydrogenase/6-phosphogluconolactonase (910 aa).

The segment at 1–170 (MDYENFVKSA…DFHIASLFPN (170 aa)) is 6-phosphogluconolactonase. The interval 171 to 276 (IFYNIYMNNY…PATYLIDTSC (106 aa)) is linker. Positions 277–910 (TNENVNINNN…FYEDDLLDIN (634 aa)) are glucose-6-phosphate 1-dehydrogenase. Residues 345–352 (GCSGDLAK), Arg-379, and Lys-548 each bind NADP(+). D-glucose 6-phosphate is bound by residues Lys-548, 578-582 (HYLGK), Glu-616, and Asp-635. Residue His-640 is the Proton acceptor of the active site. Residues 689-711 (ENFKEDENNDDESKKNHSYHDDP) are disordered. Residue Lys-742 coordinates NADP(+). Lys-745 is a D-glucose 6-phosphate binding site. Position 755 (Arg-755) interacts with NADP(+). Position 779 (Gln-779) interacts with D-glucose 6-phosphate. 785-787 (YLK) is a binding site for NADP(+).

The protein in the N-terminal section; belongs to the glucosamine/galactosamine-6-phosphate isomerase family. 6-phosphogluconolactonase subfamily. It in the C-terminal section; belongs to the glucose-6-phosphate dehydrogenase family. In terms of assembly, homotetramer.

It carries out the reaction 6-phospho-D-glucono-1,5-lactone + H2O = 6-phospho-D-gluconate + H(+). The enzyme catalyses D-glucose 6-phosphate + NADP(+) = 6-phospho-D-glucono-1,5-lactone + NADPH + H(+). The protein operates within carbohydrate degradation; pentose phosphate pathway; D-ribulose 5-phosphate from D-glucose 6-phosphate (oxidative stage): step 1/3. It functions in the pathway carbohydrate degradation; pentose phosphate pathway; D-ribulose 5-phosphate from D-glucose 6-phosphate (oxidative stage): step 2/3. Its activity is regulated as follows. G6PD activity is inhibited by glucosamine-6-phosphate, NADPH, and 4-(4-bromophenyl)-7-(3,4-dimethoxyphenyl)-4,6,7,8-tetrahydroquinoline-2,5(1 H,3H)-dione. G6PD and 6PGL activities can be reversibly inhibited by S-glutathionylation (in vitro). In terms of biological role, bifunctional enzyme which catalyzes the first two steps of the oxidative pentose-phosphate pathway, which represents a route for the dissimilation of carbohydrates besides glycolysis. The main function of this enzyme is to provide reducing power (NADPH) and pentose phosphates for fatty acid and nucleic acid synthesis. The protein is Bifunctional glucose-6-phosphate 1-dehydrogenase/6-phosphogluconolactonase of Plasmodium falciparum (isolate 3D7).